The chain runs to 461 residues: Bifunctional protein GlmU (461 aa).

Residues 1–232 are pyrophosphorylase; the sequence is MNLQIIILAA…SFEVQGINNR (232 aa). UDP-N-acetyl-alpha-D-glucosamine contacts are provided by residues 8 to 11, Lys-22, Gln-73, and 78 to 79; these read LAAG and GT. Asp-102 contributes to the Mg(2+) binding site. UDP-N-acetyl-alpha-D-glucosamine contacts are provided by Gly-142, Glu-157, and Asn-230. Mg(2+) is bound at residue Asn-230. The linker stretch occupies residues 233 to 253; that stretch reads QQLQQLERIWQQRAANQLMEK. Positions 254–461 are N-acetyltransferase; it reads GATLADANRF…WKRPVKRERD (208 aa). Arg-336 and Lys-354 together coordinate UDP-N-acetyl-alpha-D-glucosamine. The Proton acceptor role is filled by His-366. The UDP-N-acetyl-alpha-D-glucosamine site is built by Tyr-369 and Asn-380. Acetyl-CoA-binding positions include Ala-383, 389-390, Ser-408, and Ala-426; that span reads NY.

This sequence in the N-terminal section; belongs to the N-acetylglucosamine-1-phosphate uridyltransferase family. In the C-terminal section; belongs to the transferase hexapeptide repeat family. As to quaternary structure, homotrimer. Mg(2+) serves as cofactor.

The protein resides in the cytoplasm. It catalyses the reaction alpha-D-glucosamine 1-phosphate + acetyl-CoA = N-acetyl-alpha-D-glucosamine 1-phosphate + CoA + H(+). The enzyme catalyses N-acetyl-alpha-D-glucosamine 1-phosphate + UTP + H(+) = UDP-N-acetyl-alpha-D-glucosamine + diphosphate. Its pathway is nucleotide-sugar biosynthesis; UDP-N-acetyl-alpha-D-glucosamine biosynthesis; N-acetyl-alpha-D-glucosamine 1-phosphate from alpha-D-glucosamine 6-phosphate (route II): step 2/2. It functions in the pathway nucleotide-sugar biosynthesis; UDP-N-acetyl-alpha-D-glucosamine biosynthesis; UDP-N-acetyl-alpha-D-glucosamine from N-acetyl-alpha-D-glucosamine 1-phosphate: step 1/1. The protein operates within bacterial outer membrane biogenesis; LPS lipid A biosynthesis. Its function is as follows. Catalyzes the last two sequential reactions in the de novo biosynthetic pathway for UDP-N-acetylglucosamine (UDP-GlcNAc). The C-terminal domain catalyzes the transfer of acetyl group from acetyl coenzyme A to glucosamine-1-phosphate (GlcN-1-P) to produce N-acetylglucosamine-1-phosphate (GlcNAc-1-P), which is converted into UDP-GlcNAc by the transfer of uridine 5-monophosphate (from uridine 5-triphosphate), a reaction catalyzed by the N-terminal domain. This is Bifunctional protein GlmU from Legionella pneumophila subsp. pneumophila (strain Philadelphia 1 / ATCC 33152 / DSM 7513).